The primary structure comprises 197 residues: Thymidylate kinase (197 aa).

Residue G7 to S14 participates in ATP binding.

This sequence belongs to the thymidylate kinase family.

The enzyme catalyses dTMP + ATP = dTDP + ADP. Phosphorylation of dTMP to form dTDP in both de novo and salvage pathways of dTTP synthesis. The chain is Thymidylate kinase from Thermotoga sp. (strain RQ2).